The sequence spans 276 residues: Omega-amidase NIT2-B (276 aa).

Residues phenylalanine 4–leucine 248 enclose the CN hydrolase domain. Glutamate 43 serves as the catalytic Proton acceptor. Lysine 112 serves as the catalytic Proton donor. Cysteine 153 acts as the Nucleophile in catalysis.

Belongs to the carbon-nitrogen hydrolase superfamily. NIT1/NIT2 family. Homodimer.

The protein localises to the cytoplasm. It carries out the reaction 2-oxoglutaramate + H2O = 2-oxoglutarate + NH4(+). The enzyme catalyses 2-oxosuccinamate + H2O = oxaloacetate + NH4(+). Functionally, has omega-amidase activity. The role of omega-amidase is to remove potentially toxic intermediates by converting 2-oxoglutaramate and 2-oxosuccinamate to biologically useful 2-oxoglutarate and oxaloacetate, respectively. In Xenopus laevis (African clawed frog), this protein is Omega-amidase NIT2-B (nit2b).